We begin with the raw amino-acid sequence, 581 residues long: DEAD-box ATP-dependent RNA helicase 22 (581 aa).

The Q motif signature appears at V80–A108. The region spanning I111–D380 is the Helicase ATP-binding domain. A124 to T131 serves as a coordination point for ATP. The short motif at D244 to D247 is the DEAD box element. Residues Q408–A566 form the Helicase C-terminal domain.

It belongs to the DEAD box helicase family.

It carries out the reaction ATP + H2O = ADP + phosphate + H(+). This is DEAD-box ATP-dependent RNA helicase 22 (RH22) from Arabidopsis thaliana (Mouse-ear cress).